The primary structure comprises 173 residues: uncharacterized protein (173 aa).

This is an uncharacterized protein from Acanthamoeba polyphaga (Amoeba).